The sequence spans 227 residues: 2,3-bisphosphoglycerate-dependent phosphoglycerate mutase (227 aa).

Residues 7 to 14, 20 to 21, arginine 59, 86 to 89, lysine 97, 113 to 114, and 182 to 183 each bind substrate; these read RHGFSEWN, TG, ERHY, RR, and GN. Histidine 8 (tele-phosphohistidine intermediate) is an active-site residue. Catalysis depends on glutamate 86, which acts as the Proton donor/acceptor.

This sequence belongs to the phosphoglycerate mutase family. BPG-dependent PGAM subfamily. In terms of assembly, homodimer.

The catalysed reaction is (2R)-2-phosphoglycerate = (2R)-3-phosphoglycerate. It functions in the pathway carbohydrate degradation; glycolysis; pyruvate from D-glyceraldehyde 3-phosphate: step 3/5. In terms of biological role, catalyzes the interconversion of 2-phosphoglycerate and 3-phosphoglycerate. This chain is 2,3-bisphosphoglycerate-dependent phosphoglycerate mutase, found in Glaesserella parasuis serovar 5 (strain SH0165) (Haemophilus parasuis).